The sequence spans 396 residues: Protein-export membrane protein SecD (396 aa).

Helical transmembrane passes span 12–32 (ILIL…KGLD), 243–263 (LKGT…IVSI), 272–292 (IPIL…ASLI), 298–318 (LPSI…QIVI), 338–358 (FFII…LFVL), and 360–380 (VGML…GIFI).

It belongs to the SecD/SecF family. SecD subfamily. In terms of assembly, part of the protein translocation apparatus. Forms a complex with SecF.

It localises to the cell membrane. In terms of biological role, involved in protein export. In Methanocaldococcus jannaschii (strain ATCC 43067 / DSM 2661 / JAL-1 / JCM 10045 / NBRC 100440) (Methanococcus jannaschii), this protein is Protein-export membrane protein SecD.